Here is a 323-residue protein sequence, read N- to C-terminus: Annexin A3 (323 aa).

Ala-2 is modified (N-acetylalanine). Annexin repeat units follow at residues 18-89, 90-161, 173-245, and 249-320; these read FNPS…ALVT, PPAV…ILAN, QLAR…AIVR, and NTPA…KICG. Lys-177 carries the N6-acetyllysine modification. Thr-267 bears the Phosphothreonine mark.

Belongs to the annexin family.

Functionally, inhibitor of phospholipase A2, also possesses anti-coagulant properties. Also cleaves the cyclic bond of inositol 1,2-cyclic phosphate to form inositol 1-phosphate. This Bos taurus (Bovine) protein is Annexin A3 (ANXA3).